The primary structure comprises 192 residues: Epoxyqueuosine reductase QueH (192 aa).

Positions 9, 10, 87, and 90 each coordinate [4Fe-4S] cluster. Residues Cys-169 and Cys-171 are joined by a disulfide bond.

This sequence belongs to the QueH family.

The catalysed reaction is epoxyqueuosine(34) in tRNA + AH2 = queuosine(34) in tRNA + A + H2O. The protein operates within tRNA modification; tRNA-queuosine biosynthesis. Functionally, catalyzes the conversion of epoxyqueuosine (oQ) to queuosine (Q), which is a hypermodified base found in the wobble positions of tRNA(Asp), tRNA(Asn), tRNA(His) and tRNA(Tyr). The polypeptide is Epoxyqueuosine reductase QueH (Thermotoga maritima (strain ATCC 43589 / DSM 3109 / JCM 10099 / NBRC 100826 / MSB8)).